The following is a 728-amino-acid chain: Catalase-peroxidase 2 (728 aa).

Positions 1-20 (MSNEGKCPFNHGKRNGTTNR) are disordered. Positions 91 to 214 (WHSAGTYRTG…LAAVQMGLIY (124 aa)) form a cross-link, tryptophyl-tyrosyl-methioninium (Trp-Tyr) (with M-240). The active-site Proton acceptor is histidine 92. The segment at residues 214–240 (YVNPEGPNGNPDPLASARDIRETFARM) is a cross-link (tryptophyl-tyrosyl-methioninium (Tyr-Met) (with W-91)). Histidine 255 serves as a coordination point for heme b. Residues 335-355 (AHQWQPKGGAGADSVPDPFEP) form a disordered region.

This sequence belongs to the peroxidase family. Peroxidase/catalase subfamily. In terms of assembly, homodimer or homotetramer. The cofactor is heme b. Formation of the three residue Trp-Tyr-Met cross-link is important for the catalase, but not the peroxidase activity of the enzyme.

It catalyses the reaction H2O2 + AH2 = A + 2 H2O. The enzyme catalyses 2 H2O2 = O2 + 2 H2O. In terms of biological role, bifunctional enzyme with both catalase and broad-spectrum peroxidase activity. This chain is Catalase-peroxidase 2, found in Burkholderia cenocepacia (strain HI2424).